The following is a 492-amino-acid chain: Aspartyl/glutamyl-tRNA(Asn/Gln) amidotransferase subunit B (492 aa).

This sequence belongs to the GatB/GatE family. GatB subfamily. In terms of assembly, heterotrimer of A, B and C subunits.

The catalysed reaction is L-glutamyl-tRNA(Gln) + L-glutamine + ATP + H2O = L-glutaminyl-tRNA(Gln) + L-glutamate + ADP + phosphate + H(+). It carries out the reaction L-aspartyl-tRNA(Asn) + L-glutamine + ATP + H2O = L-asparaginyl-tRNA(Asn) + L-glutamate + ADP + phosphate + 2 H(+). Functionally, allows the formation of correctly charged Asn-tRNA(Asn) or Gln-tRNA(Gln) through the transamidation of misacylated Asp-tRNA(Asn) or Glu-tRNA(Gln) in organisms which lack either or both of asparaginyl-tRNA or glutaminyl-tRNA synthetases. The reaction takes place in the presence of glutamine and ATP through an activated phospho-Asp-tRNA(Asn) or phospho-Glu-tRNA(Gln). In Dehalococcoides mccartyi (strain ATCC BAA-2266 / KCTC 15142 / 195) (Dehalococcoides ethenogenes (strain 195)), this protein is Aspartyl/glutamyl-tRNA(Asn/Gln) amidotransferase subunit B.